The chain runs to 793 residues: Short transient receptor potential channel 1 (793 aa).

Positions 1 to 30 (MMAALYPSTDLSGASSSSLPSSPSSSSPNE) are disordered. The Cytoplasmic segment spans residues 1-345 (MMAALYPSTD…FGQMSGYRRK (345 aa)). Over residues 15–28 (SSSSLPSSPSSSSP) the composition is skewed to low complexity. ANK repeat units lie at residues 46–75 (LNEK…SGDL), 83–109 (LGRN…YGCQ), 111–156 (ADAL…EYST), and 158–180 (MDVA…MLLK). The Zn(2+) site is built by His189, Cys193, Cys195, and Cys198. The discontinuously helical intramembrane region spans 346-379 (PTCKKIMTVLTVGIFWPVLSLCYLIAPKSQFGRI). Residues 380–386 (IHTPFMK) are Cytoplasmic-facing. A helical membrane pass occupies residues 387–404 (FIIHGASYFTFLLLLNLY). At 405-422 (SLVYHEDKKNTMGPALER) the chain is on the extracellular side. The helical transmembrane segment at 423–439 (IDYLLILWIIGMIWSDI) threads the bilayer. Residues 440–455 (KRLWYEGLEDFLEESR) lie on the Cytoplasmic side of the membrane. Residues 456–475 (NQLSFVMNSLYLATFALKEE) traverse the membrane as a helical segment. At 476–496 (AHNKFHDFADRKDWDAFHPTL) the chain is on the extracellular side. Residues 497–517 (VAEGLFAFANVLSYLRLFFYV) form a helical membrane-spanning segment. Residues 518–536 (YTSSILGPLQISMGRMLQD) lie on the Cytoplasmic side of the membrane. The chain crosses the membrane as a helical span at residues 537-558 (FGKFLGMFLLVLFSFTIGLTQL). Residues 559–623 (YDKGYTPKEQ…GEELQSFVGA (65 aa)) lie on the Extracellular side of the membrane. Residues Cys571 and Cys576 are joined by a disulfide bond. The chain crosses the membrane as a helical span at residues 624–644 (FIVGTYNVVVVIVLTKLLVAM). Residues 645–793 (LHKSFQLIAN…SKYAMFYPRN (149 aa)) lie on the Cytoplasmic side of the membrane.

The protein belongs to the transient receptor (TC 1.A.4) family. STrpC subfamily. TRPC1 sub-subfamily. Heterotetramer with TRPC4 and/or TRPC5. Forms a heteromeric ion channel with TRPC4, with a 1:3 TRPC1:TRPC4 stoichiometry. Unlike other TRP channel proteins, does not form a homomeric channel. Interacts with TRPC4AP. Interacts with ITPR3. Interacts with MX1 and RNF24. Interacts with FKBP4. Interacts with PLSCR1. Interacts with PKD2L2. Forms a heterotetramer with PKD2 with a 2:2 stoichiometry; has distinct channel properties separate from PKD2 or TRPC1 homomers alone. In terms of processing, activation of PRKCA induces phosphorylation of TRPC1 and subsequent Ca2+ entry into cells.

The protein localises to the cell membrane. The catalysed reaction is Ca(2+)(in) = Ca(2+)(out). It catalyses the reaction Na(+)(in) = Na(+)(out). It carries out the reaction Li(+)(in) = Li(+)(out). The enzyme catalyses Cs(+)(in) = Cs(+)(out). Its activity is regulated as follows. May be operated by a phosphatidylinositol second messenger system activated by receptor tyrosine kinases or G-protein coupled receptors. Also activated by intracellular calcium store depletion. Its function is as follows. Forms a receptor-activated non-selective calcium permeant cation channel. Forms a heteromeric ion channel with TRPC4 or TRPC5 that has reduced calcium permeability compared to the homomeric TRPC4 or TRPC5 channel. Also permeable to monovalent ions including sodium, lithium and cesium ions. The protein is Short transient receptor potential channel 1 (TRPC1) of Bos taurus (Bovine).